Reading from the N-terminus, the 218-residue chain is Ras-related protein Rab-11B (218 aa).

An N-acetylglycine modification is found at Gly-2. The GTP site is built by Ser-20, Gly-21, Gly-23, Lys-24, Ser-25, Asn-26, Asn-37, Leu-38, Ser-40, Ser-42, and Thr-43. Position 25 (Ser-25) interacts with Mg(2+). Positions 36–47 (FNLESKSTIGVE) match the Switch 1 motif. Mg(2+)-binding residues include Thr-43 and Asp-66. The short motif at 67–86 (TAGQERYRAITSAYYRGAVG) is the Switch 2 element. Residues Gly-69, Asn-124, Lys-125, Asp-127, Ala-155, and Leu-156 each coordinate GTP. The disordered stretch occupies residues 183-218 (DRSAHDESPGNNVVDISVPPTTDGQKSNKLQCCQNM). A compositionally biased stretch (polar residues) spans 201-218 (PPTTDGQKSNKLQCCQNM). Residues Cys-214 and Cys-215 are each lipidated (S-geranylgeranyl cysteine). A Cysteine methyl ester modification is found at Cys-215. A propeptide spans 216–218 (QNM) (removed in mature form).

The protein belongs to the small GTPase superfamily. Rab family. Mg(2+) serves as cofactor.

It is found in the recycling endosome membrane. The protein localises to the cytoplasmic vesicle. It localises to the secretory vesicle. Its subcellular location is the synaptic vesicle membrane. The protein resides in the phagosome membrane. It carries out the reaction GTP + H2O = GDP + phosphate + H(+). Regulated by guanine nucleotide exchange factors (GEFs) which promote the exchange of bound GDP for free GTP. Regulated by GTPase activating proteins (GAPs) which increase the GTP hydrolysis activity. Inhibited by GDP dissociation inhibitors (GDIs) which prevent Rab-GDP dissociation. The small GTPases Rab are key regulators of intracellular membrane trafficking, from the formation of transport vesicles to their fusion with membranes. Rabs cycle between an inactive GDP-bound form and an active GTP-bound form that is able to recruit to membranes different set of downstream effectors directly responsible for vesicle formation, movement, tethering and fusion. That Rab plays a role in endocytic recycling, regulating apical recycling of several transmembrane proteins including cystic fibrosis transmembrane conductance regulator/CFTR, epithelial sodium channel/ENaC, potassium voltage-gated channel, and voltage-dependent L-type calcium channel. May also regulate constitutive and regulated secretion, like insulin granule exocytosis. Required for melanosome transport and release from melanocytes. Also regulates V-ATPase intracellular transport in response to extracellular acidosis. The protein is Ras-related protein Rab-11B of Diplobatis ommata (Ocellated electric ray).